A 548-amino-acid chain; its full sequence is Chaperonin GroEL 2 (548 aa).

ATP is bound by residues 30–33 (TLGP), Lys-51, 87–91 (DGTTT), Gly-415, and Asp-496. Residues 529-548 (KDAMPSPDMGGMGGMGGMGF) are disordered. Over residues 538-548 (GGMGGMGGMGF) the composition is skewed to gly residues.

This sequence belongs to the chaperonin (HSP60) family. In terms of assembly, forms a cylinder of 14 subunits composed of two heptameric rings stacked back-to-back. Interacts with the co-chaperonin GroES.

Its subcellular location is the cytoplasm. It catalyses the reaction ATP + H2O + a folded polypeptide = ADP + phosphate + an unfolded polypeptide.. Functionally, together with its co-chaperonin GroES, plays an essential role in assisting protein folding. The GroEL-GroES system forms a nano-cage that allows encapsulation of the non-native substrate proteins and provides a physical environment optimized to promote and accelerate protein folding. The sequence is that of Chaperonin GroEL 2 from Rhodospirillum rubrum (strain ATCC 11170 / ATH 1.1.1 / DSM 467 / LMG 4362 / NCIMB 8255 / S1).